Reading from the N-terminus, the 248-residue chain is Uridylate kinase (248 aa).

11-14 (KISG) contacts ATP. UMP is bound at residue glycine 53. ATP contacts are provided by glycine 54 and arginine 58. UMP is bound by residues aspartate 74 and 135-142 (AGSPYLTT). Positions 162, 169, and 172 each coordinate ATP.

The protein belongs to the UMP kinase family. As to quaternary structure, homohexamer.

The protein localises to the cytoplasm. The enzyme catalyses UMP + ATP = UDP + ADP. It functions in the pathway pyrimidine metabolism; CTP biosynthesis via de novo pathway; UDP from UMP (UMPK route): step 1/1. Inhibited by UTP. Functionally, catalyzes the reversible phosphorylation of UMP to UDP. The polypeptide is Uridylate kinase (Chlamydia pneumoniae (Chlamydophila pneumoniae)).